Consider the following 94-residue polypeptide: Co-chaperonin GroES (94 aa).

The protein belongs to the GroES chaperonin family. As to quaternary structure, heptamer of 7 subunits arranged in a ring. Interacts with the chaperonin GroEL.

The protein localises to the cytoplasm. In terms of biological role, together with the chaperonin GroEL, plays an essential role in assisting protein folding. The GroEL-GroES system forms a nano-cage that allows encapsulation of the non-native substrate proteins and provides a physical environment optimized to promote and accelerate protein folding. GroES binds to the apical surface of the GroEL ring, thereby capping the opening of the GroEL channel. This is Co-chaperonin GroES from Bacillus sp. (strain PS3).